We begin with the raw amino-acid sequence, 85 residues long: Protein BTH_I0359 (85 aa).

This Burkholderia thailandensis (strain ATCC 700388 / DSM 13276 / CCUG 48851 / CIP 106301 / E264) protein is Protein BTH_I0359.